The following is a 163-amino-acid chain: MAENTNDSAVLETEEELTSYTTETNAGAGTGTSTIAPGYGTGRRKEAVARVRLVPGTGKWTINGRTLEEYFPAKLLQREVNSPIVLLKLEGKFDAIVLVDGGGTTGQAGAIRLGVARALNAIDRDANRAALKKAGFLTRDARVVERKKAGLHKARRAPQFSKR.

The tract at residues 1–41 (MAENTNDSAVLETEEELTSYTTETNAGAGTGTSTIAPGYGT) is disordered. The segment covering 18–38 (TSYTTETNAGAGTGTSTIAPG) has biased composition (low complexity).

Belongs to the universal ribosomal protein uS9 family.

In Bifidobacterium adolescentis (strain ATCC 15703 / DSM 20083 / NCTC 11814 / E194a), this protein is Small ribosomal subunit protein uS9.